The sequence spans 255 residues: Hydroxyacylglutathione hydrolase (255 aa).

Histidine 56, histidine 58, aspartate 60, histidine 61, histidine 114, aspartate 133, and histidine 171 together coordinate Zn(2+).

The protein belongs to the metallo-beta-lactamase superfamily. Glyoxalase II family. Monomer. Requires Zn(2+) as cofactor.

It catalyses the reaction an S-(2-hydroxyacyl)glutathione + H2O = a 2-hydroxy carboxylate + glutathione + H(+). Its pathway is secondary metabolite metabolism; methylglyoxal degradation; (R)-lactate from methylglyoxal: step 2/2. Thiolesterase that catalyzes the hydrolysis of S-D-lactoyl-glutathione to form glutathione and D-lactic acid. The protein is Hydroxyacylglutathione hydrolase of Cereibacter sphaeroides (strain ATCC 17029 / ATH 2.4.9) (Rhodobacter sphaeroides).